Here is a 556-residue protein sequence, read N- to C-terminus: Potassium-transporting ATPase potassium-binding subunit (556 aa).

Transmembrane regions (helical) follow at residues 6 to 26 (AGIA…VPLG), 65 to 85 (SVLA…LVQG), 133 to 153 (GLAV…IALV), 176 to 196 (LRIL…GGAI), 249 to 269 (PTPW…FSLP), 283 to 303 (VAIA…TMLL), 378 to 398 (GLYG…LMVG), 415 to 435 (LAAS…AIAM), 483 to 503 (ALGL…LALA), and 526 to 546 (FVGM…LPIL).

It belongs to the KdpA family. The system is composed of three essential subunits: KdpA, KdpB and KdpC.

Its subcellular location is the cell membrane. In terms of biological role, part of the high-affinity ATP-driven potassium transport (or Kdp) system, which catalyzes the hydrolysis of ATP coupled with the electrogenic transport of potassium into the cytoplasm. This subunit binds the extracellular potassium ions and delivers the ions to the membrane domain of KdpB through an intramembrane tunnel. The chain is Potassium-transporting ATPase potassium-binding subunit from Mycolicibacterium smegmatis (strain ATCC 700084 / mc(2)155) (Mycobacterium smegmatis).